The sequence spans 252 residues: Clc-like protein 2 (252 aa).

4 helical membrane-spanning segments follow: residues 7-29, 91-111, 127-147, and 173-193; these read YAIL…TPAW, LFHI…SFCV, VFLV…AVYS, and IALT…VHVL.

It belongs to the Clc family.

The protein resides in the membrane. The chain is Clc-like protein 2 (clc-2) from Caenorhabditis elegans.